We begin with the raw amino-acid sequence, 524 residues long: RNA-directed RNA polymerase (524 aa).

The RdRp catalytic domain maps to 220-340; sequence QSIAQIDFSS…NFETALCRQE (121 aa).

The catalysed reaction is RNA(n) + a ribonucleoside 5'-triphosphate = RNA(n+1) + diphosphate. Its function is as follows. RNA-dependent RNA polymerase which replicates the viral genome. The chain is RNA-directed RNA polymerase from Cryptosporidium parvum.